Reading from the N-terminus, the 202-residue chain is UPF0637 protein Exig_2520 (202 aa).

Belongs to the UPF0637 family.

This Exiguobacterium sibiricum (strain DSM 17290 / CCUG 55495 / CIP 109462 / JCM 13490 / 255-15) protein is UPF0637 protein Exig_2520.